The chain runs to 372 residues: Protein RecA (372 aa).

66–73 (GPESSGKT) serves as a coordination point for ATP. The segment at 328 to 359 (GVGVRPEEPTATESGPDAATAESAPAVPAPAT) is disordered. A compositionally biased stretch (low complexity) spans 345-359 (AATAESAPAVPAPAT).

The protein belongs to the RecA family.

The protein localises to the cytoplasm. Functionally, can catalyze the hydrolysis of ATP in the presence of single-stranded DNA, the ATP-dependent uptake of single-stranded DNA by duplex DNA, and the ATP-dependent hybridization of homologous single-stranded DNAs. It interacts with LexA causing its activation and leading to its autocatalytic cleavage. This chain is Protein RecA, found in Streptomyces ambofaciens.